We begin with the raw amino-acid sequence, 220 residues long: Pyridoxine/pyridoxamine 5'-phosphate oxidase (220 aa).

Residues 13-16 (RVEY) and K77 contribute to the substrate site. FMN is bound by residues 72–77 (RTVLCK), 87–88 (FT), K94, and Q116. 3 residues coordinate substrate: Y134, R138, and S142. FMN-binding positions include 151–152 (QS) and W197. 203–205 (RVH) contacts substrate. R207 contributes to the FMN binding site.

This sequence belongs to the pyridoxamine 5'-phosphate oxidase family. Homodimer. It depends on FMN as a cofactor.

The catalysed reaction is pyridoxamine 5'-phosphate + O2 + H2O = pyridoxal 5'-phosphate + H2O2 + NH4(+). It carries out the reaction pyridoxine 5'-phosphate + O2 = pyridoxal 5'-phosphate + H2O2. The protein operates within cofactor metabolism; pyridoxal 5'-phosphate salvage; pyridoxal 5'-phosphate from pyridoxamine 5'-phosphate: step 1/1. It functions in the pathway cofactor metabolism; pyridoxal 5'-phosphate salvage; pyridoxal 5'-phosphate from pyridoxine 5'-phosphate: step 1/1. Its function is as follows. Catalyzes the oxidation of either pyridoxine 5'-phosphate (PNP) or pyridoxamine 5'-phosphate (PMP) into pyridoxal 5'-phosphate (PLP). This Mycobacterium sp. (strain KMS) protein is Pyridoxine/pyridoxamine 5'-phosphate oxidase.